The following is a 129-amino-acid chain: Fluoride-specific ion channel FluC (129 aa).

4 helical membrane passes run 8–28 (FFCV…MVLA), 36–56 (AFPF…GLLL), 71–91 (FLGV…VEVV), and 103–123 (ALHI…AMML). Gly-78 and Thr-81 together coordinate Na(+).

The protein belongs to the fluoride channel Fluc/FEX (TC 1.A.43) family.

Its subcellular location is the cell inner membrane. It carries out the reaction fluoride(in) = fluoride(out). Its activity is regulated as follows. Na(+) is not transported, but it plays an essential structural role and its presence is essential for fluoride channel function. Fluoride-specific ion channel. Important for reducing fluoride concentration in the cell, thus reducing its toxicity. The chain is Fluoride-specific ion channel FluC from Idiomarina loihiensis (strain ATCC BAA-735 / DSM 15497 / L2-TR).